The sequence spans 445 residues: Glutamate--tRNA ligase 1 (445 aa).

A 'HIGH' region motif is present at residues P10–N20. The short motif at K240–R244 is the 'KMSKS' region element. An ATP-binding site is contributed by K243.

This sequence belongs to the class-I aminoacyl-tRNA synthetase family. Glutamate--tRNA ligase type 1 subfamily. As to quaternary structure, monomer.

It is found in the cytoplasm. It carries out the reaction tRNA(Glu) + L-glutamate + ATP = L-glutamyl-tRNA(Glu) + AMP + diphosphate. Functionally, catalyzes the attachment of glutamate to tRNA(Glu) in a two-step reaction: glutamate is first activated by ATP to form Glu-AMP and then transferred to the acceptor end of tRNA(Glu). This chain is Glutamate--tRNA ligase 1, found in Rickettsia bellii (strain OSU 85-389).